We begin with the raw amino-acid sequence, 104 residues long: Protein S100-A14 (104 aa).

Residues 27–61 (KNFHQYSVEGGKETLTPSELRDLVTQQLPHLMPSN) form the EF-hand domain.

This sequence belongs to the S-100 family. Homodimer. Interacts with AGER. In terms of tissue distribution, expressed at highest levels in colon and at moderate levels in thymus, kidney, liver, small intestine, and lung. Low expression in heart and no expression is seen in brain, skeletal muscle, spleen, placenta and peripheral blood leukocytes.

The protein resides in the cytoplasm. Functionally, modulates P53/TP53 protein levels, and thereby plays a role in the regulation of cell survival and apoptosis. Depending on the context, it can promote cell proliferation or apoptosis. Plays a role in the regulation of cell migration by modulating the levels of MMP2, a matrix protease that is under transcriptional control of P53/TP53. Does not bind calcium. The polypeptide is Protein S100-A14 (S100A14) (Homo sapiens (Human)).